A 208-amino-acid polypeptide reads, in one-letter code: Large ribosomal subunit protein uL4 (208 aa).

The disordered stretch occupies residues arginine 54–serine 78.

This sequence belongs to the universal ribosomal protein uL4 family. Part of the 50S ribosomal subunit.

Functionally, one of the primary rRNA binding proteins, this protein initially binds near the 5'-end of the 23S rRNA. It is important during the early stages of 50S assembly. It makes multiple contacts with different domains of the 23S rRNA in the assembled 50S subunit and ribosome. In terms of biological role, forms part of the polypeptide exit tunnel. The sequence is that of Large ribosomal subunit protein uL4 from Methylobacillus flagellatus (strain ATCC 51484 / DSM 6875 / VKM B-1610 / KT).